The following is a 219-amino-acid chain: Probable GTP-binding protein EngB (219 aa).

The EngB-type G domain maps to 31–205; sequence VGVEIAFAGR…LSILNEWCHP (175 aa). Residues 39-46, 66-70, 84-87, 151-154, and 184-186 contribute to the GTP site; these read GRSNAGKS, GRTQL, DLPG, TKSD, and FSA. Ser46 and Thr68 together coordinate Mg(2+).

This sequence belongs to the TRAFAC class TrmE-Era-EngA-EngB-Septin-like GTPase superfamily. EngB GTPase family. Requires Mg(2+) as cofactor.

Necessary for normal cell division and for the maintenance of normal septation. This is Probable GTP-binding protein EngB from Shewanella sp. (strain W3-18-1).